The sequence spans 343 residues: DNA-directed RNA polymerase subunit alpha (343 aa).

Positions 1-243 (MTQEIDEKIP…EQLDIFINFD (243 aa)) are alpha N-terminal domain (alpha-NTD). Residues 261–343 (ENPYLDKPVE…NAPSDAETEE (83 aa)) are alpha C-terminal domain (alpha-CTD).

The protein belongs to the RNA polymerase alpha chain family. As to quaternary structure, homodimer. The RNAP catalytic core consists of 2 alpha, 1 beta, 1 beta' and 1 omega subunit. When a sigma factor is associated with the core the holoenzyme is formed, which can initiate transcription.

It carries out the reaction RNA(n) + a ribonucleoside 5'-triphosphate = RNA(n+1) + diphosphate. Functionally, DNA-dependent RNA polymerase catalyzes the transcription of DNA into RNA using the four ribonucleoside triphosphates as substrates. This chain is DNA-directed RNA polymerase subunit alpha, found in Desulfotalea psychrophila (strain LSv54 / DSM 12343).